The chain runs to 281 residues: uncharacterized protein (281 aa).

Residues 5–27 (AYVTVIYGNNIYLTGALVLGYTL) traverse the membrane as a helical segment.

It localises to the membrane. This is an uncharacterized protein from Acanthamoeba polyphaga mimivirus (APMV).